The chain runs to 375 residues: Leucoanthocyanidin dioxygenase 1 (375 aa).

The Fe2OG dioxygenase domain occupies 218–317 (LLLQLKINYY…RLSWVVFCEP (100 aa)). Fe cation contacts are provided by histidine 242, aspartate 244, and histidine 298. Position 308 (arginine 308) interacts with 2-oxoglutarate.

The protein belongs to the iron/ascorbate-dependent oxidoreductase family. L-ascorbate serves as cofactor. The cofactor is Fe(2+).

The enzyme catalyses a (2R,3S,4S)-leucoanthocyanidin + 2-oxoglutarate + O2 = a 4-H-anthocyanidin with a 3-hydroxy group + succinate + CO2 + 2 H2O. It participates in pigment biosynthesis; anthocyanin biosynthesis. Its function is as follows. Involved in anthocyanin and protoanthocyanidin biosynthesis by catalyzing the oxidation of leucoanthocyanidins into anthocyanidins. Is able to synthesize anthocyanin pigments from leucoanthocyanidins in aleurone tissue. Converts dihydroquercetin to quercetin in vitro. The protein is Leucoanthocyanidin dioxygenase 1 of Oryza sativa subsp. indica (Rice).